Consider the following 615-residue polypeptide: DNA mismatch repair protein MutL (615 aa).

Residues 362-397 (HFAEPAVREPVAPRYTPAPASGSRPAAPWPNAQPGY) form a disordered region. Residues 378–391 (PAPASGSRPAAPWP) are compositionally biased toward low complexity.

This sequence belongs to the DNA mismatch repair MutL/HexB family.

In terms of biological role, this protein is involved in the repair of mismatches in DNA. It is required for dam-dependent methyl-directed DNA mismatch repair. May act as a 'molecular matchmaker', a protein that promotes the formation of a stable complex between two or more DNA-binding proteins in an ATP-dependent manner without itself being part of a final effector complex. The polypeptide is DNA mismatch repair protein MutL (Escherichia coli O17:K52:H18 (strain UMN026 / ExPEC)).